The following is a 160-amino-acid chain: Transcriptional repressor NrdR (160 aa).

The segment at 3-34 (CPYCQCEDTQVKDSRPAEEGAVIRRRRVCSVC) is a zinc-finger region. Residues 49-139 (LLVLKKSGRR…VYRDFRNASD (91 aa)) enclose the ATP-cone domain.

This sequence belongs to the NrdR family. Zn(2+) serves as cofactor.

Its function is as follows. Negatively regulates transcription of bacterial ribonucleotide reductase nrd genes and operons by binding to NrdR-boxes. In Bartonella bacilliformis (strain ATCC 35685 / KC583 / Herrer 020/F12,63), this protein is Transcriptional repressor NrdR.